We begin with the raw amino-acid sequence, 278 residues long: DNA repair protein RecO (278 aa).

Residues 1–12 are compositionally biased toward polar residues; that stretch reads MGTNDALTSTED. Residues 1-41 form a disordered region; that stretch reads MGTNDALTSTEDAVTAGANDAPLPAPPEPPRKARRATSRTS.

The protein belongs to the RecO family.

Its function is as follows. Involved in DNA repair and RecF pathway recombination. The sequence is that of DNA repair protein RecO from Burkholderia orbicola (strain AU 1054).